The chain runs to 1482 residues: Chromosome partition protein MukB (1482 aa).

34–41 lines the ATP pocket; the sequence is GGNGAGKS. Coiled coils occupy residues 337–468, 509–604, 780–805, 835–1044, 1070–1115, and 1210–1265; these read LNLV…LSVA, QHLA…APIW, RAARENRLEILHAEREKLAERYATLS, EAEI…ELVD, TNRA…TAKA, and EAIE…LQAV. The flexible hinge stretch occupies residues 666–783; sequence PGGAEDQRLV…AVPLFGRAAR (118 aa).

It belongs to the SMC family. MukB subfamily. In terms of assembly, homodimerization via its hinge domain. Binds to DNA via its C-terminal region. Interacts, and probably forms a ternary complex, with MukE and MukF via its C-terminal region. The complex formation is stimulated by calcium or magnesium. Interacts with tubulin-related protein FtsZ.

It is found in the cytoplasm. It localises to the nucleoid. Functionally, plays a central role in chromosome condensation, segregation and cell cycle progression. Functions as a homodimer, which is essential for chromosome partition. Involved in negative DNA supercoiling in vivo, and by this means organize and compact chromosomes. May achieve or facilitate chromosome segregation by condensation DNA from both sides of a centrally located replisome during cell division. The chain is Chromosome partition protein MukB from Serratia proteamaculans (strain 568).